Here is a 285-residue protein sequence, read N- to C-terminus: Bifunctional protein FolD (285 aa).

NADP(+)-binding positions include 165 to 167 (GRS), Ser-190, and Ile-231.

This sequence belongs to the tetrahydrofolate dehydrogenase/cyclohydrolase family. As to quaternary structure, homodimer.

It catalyses the reaction (6R)-5,10-methylene-5,6,7,8-tetrahydrofolate + NADP(+) = (6R)-5,10-methenyltetrahydrofolate + NADPH. The catalysed reaction is (6R)-5,10-methenyltetrahydrofolate + H2O = (6R)-10-formyltetrahydrofolate + H(+). It functions in the pathway one-carbon metabolism; tetrahydrofolate interconversion. Catalyzes the oxidation of 5,10-methylenetetrahydrofolate to 5,10-methenyltetrahydrofolate and then the hydrolysis of 5,10-methenyltetrahydrofolate to 10-formyltetrahydrofolate. The polypeptide is Bifunctional protein FolD (Alkaliphilus oremlandii (strain OhILAs) (Clostridium oremlandii (strain OhILAs))).